The following is a 410-amino-acid chain: 2,3-bisphosphoglycerate-independent phosphoglycerate mutase (410 aa).

Belongs to the BPG-independent phosphoglycerate mutase family. A-PGAM subfamily.

It catalyses the reaction (2R)-2-phosphoglycerate = (2R)-3-phosphoglycerate. It functions in the pathway carbohydrate degradation; glycolysis; pyruvate from D-glyceraldehyde 3-phosphate: step 3/5. Functionally, catalyzes the interconversion of 2-phosphoglycerate and 3-phosphoglycerate. The chain is 2,3-bisphosphoglycerate-independent phosphoglycerate mutase from Pyrococcus abyssi (strain GE5 / Orsay).